Consider the following 100-residue polypeptide: Small ribosomal subunit protein uS14c (100 aa).

Belongs to the universal ribosomal protein uS14 family. Part of the 30S ribosomal subunit.

Its subcellular location is the plastid. Its function is as follows. Binds 16S rRNA, required for the assembly of 30S particles. In Cuscuta reflexa (Southern Asian dodder), this protein is Small ribosomal subunit protein uS14c (rps14).